Here is a 172-residue protein sequence, read N- to C-terminus: Signal peptidase complex catalytic subunit SEC11 (172 aa).

The Cytoplasmic portion of the chain corresponds to 1-14 (MLSSLANPRQAASQ). A helical; Signal-anchor for type II membrane protein membrane pass occupies residues 15-35 (LLNFALILSTAFMMWKGLSVV). Over 36-172 (SDSPSPIVVV…MGLVVVLQRE (137 aa)) the chain is Lumenal. Catalysis depends on charge relay system residues Ser49, His90, and Asp115. The interval 158-169 (AMLGIMGLVVVL) is C-terminal short (CTS) helix.

This sequence belongs to the peptidase S26B family. Component of the signal peptidase complex (SPC) composed of a catalytic subunit SEC11 and three accessory subunits SPC1, SPC2 and SPC3. The complex induces a local thinning of the ER membrane which is used to measure the length of the signal peptide (SP) h-region of protein substrates. This ensures the selectivity of the complex towards h-regions shorter than 18-20 amino acids. SPC associates with the translocon complex.

The protein localises to the endoplasmic reticulum membrane. The enzyme catalyses Cleavage of hydrophobic, N-terminal signal or leader sequences from secreted and periplasmic proteins.. Catalytic component of the signal peptidase complex (SPC) which catalyzes the cleavage of N-terminal signal sequences from nascent proteins as they are translocated into the lumen of the endoplasmic reticulum. Specifically cleaves N-terminal signal peptides that contain a hydrophobic alpha-helix (h-region) shorter than 18-20 amino acids. This Colletotrichum graminicola (strain M1.001 / M2 / FGSC 10212) (Maize anthracnose fungus) protein is Signal peptidase complex catalytic subunit SEC11 (SEC11).